The chain runs to 941 residues: Myosin heavy chain kinase D (941 aa).

Residues 8–48 (KLSKKIEKILEKNDYLKKKVEQLTKSVDNHEFKIQELLLLL) are a coiled coil. 3 stretches are compositionally biased toward low complexity: residues 57–70 (TTTTTTTTTNNNST), 84–115 (TSTDSMTNSNNSSATSSTTPSPTQTSTITTTS), and 124–206 (NSNN…PQLS). 2 disordered regions span residues 57–234 (TTTT…KEDS) and 276–310 (SSNNTDSTNNDNSSILNDQQNQQQNQQQQNQQQQQ). A coiled-coil region spans residues 289–317 (SILNDQQNQQQNQQQQNQQQQQEEINFIT). Residues 337–582 (EYSANDDEWT…ICLQFGLPPI (246 aa)) enclose the Alpha-type protein kinase domain. WD repeat units lie at residues 635–674 (GHDERVCSLLINQDKTKLYSASADGYVKIWNLTNNEDLSK), 683–720 (AHRRSIEKMLLNEKYLFTASSDGTIKIWSLPTTTTTTT), 741–780 (DHTAEVNDMCIDIENNFLVSCSFDKQIKIYDLSTFKCIKS), 783–820 (AHGKSIKSIYMSGKYLFSSSNDQSIKIWDLEMCMCVYG), 824–861 (AHDAPITSLRMFGNRLFSASKDGEIKDWNLSTFQPTTT), 864–902 (QHNMAITDILVTSNGYLFVSSDDSTIRIIDISNQNEPIK), and 909–941 (AHRSGVNSLATDGKRIFSGGCDNLIKVWNWKNK).

The protein belongs to the protein kinase superfamily. Alpha-type protein kinase family. ALPK subfamily.

The catalysed reaction is L-threonyl-[myosin heavy-chain] + ATP = O-phospho-L-threonyl-[myosin heavy-chain] + ADP + H(+). Functionally, phosphorylates threonine. Not critical for regulating the assembly and disassembly of myosin II filament. The sequence is that of Myosin heavy chain kinase D (mhkD) from Dictyostelium discoideum (Social amoeba).